Here is a 241-residue protein sequence, read N- to C-terminus: NLP effector protein 7 (241 aa).

The N-terminal stretch at 1–19 is a signal peptide; that stretch reads MHLCALLIAAAGVLASVRA. The Conserved undecapeptide motif motif lies at 105–115; that stretch reads AIMYAWYFPKA. The Conserved heptapeptide motif motif lies at 125–131; that stretch reads GSRHYWL. Asparagine 144 carries N-linked (GlcNAc...) asparagine glycosylation.

This sequence belongs to the Necrosis inducing protein (NPP1) family.

The protein resides in the secreted. Its function is as follows. Secreted effector that acts as a pathogen-associated molecular pattern (PAMP) recognized by the plant immune system. Induces necrosis in Nicotiana benthamiana leaves and can induce Phytophthora capsici resistance in Nicotiana benthamiana. Also significantly improves disease resistance of Arabidopsis thaliana to Hyaloperonospora arabidopsidis. causes an inhibition of plant growth which is typically associated with enhanced immunity when over-expressed in Arabidopsis. This chain is NLP effector protein 7, found in Plasmopara viticola (Downy mildew of grapevine).